The primary structure comprises 325 residues: NADH-quinone oxidoreductase subunit H (325 aa).

A run of 8 helical transmembrane segments spans residues 11–31 (ILLS…CGAF), 81–101 (VIFT…FAIV), 114–134 (IGIL…LFAG), 154–174 (LSYE…AGSF), 186–206 (LWNV…GVAV), 237–257 (FFVG…TLFF), 265–285 (LPPF…FILI), and 304–324 (VCLP…LWQA).

The protein belongs to the complex I subunit 1 family. As to quaternary structure, NDH-1 is composed of 13 different subunits. Subunits NuoA, H, J, K, L, M, N constitute the membrane sector of the complex.

Its subcellular location is the cell inner membrane. It catalyses the reaction a quinone + NADH + 5 H(+)(in) = a quinol + NAD(+) + 4 H(+)(out). NDH-1 shuttles electrons from NADH, via FMN and iron-sulfur (Fe-S) centers, to quinones in the respiratory chain. The immediate electron acceptor for the enzyme in this species is believed to be ubiquinone. Couples the redox reaction to proton translocation (for every two electrons transferred, four hydrogen ions are translocated across the cytoplasmic membrane), and thus conserves the redox energy in a proton gradient. This subunit may bind ubiquinone. The protein is NADH-quinone oxidoreductase subunit H of Klebsiella pneumoniae (strain 342).